Consider the following 142-residue polypeptide: Nucleoside diphosphate kinase (142 aa).

Residues Lys11, Phe59, Arg87, Thr93, Arg104, and Asn114 each contribute to the ATP site. Catalysis depends on His117, which acts as the Pros-phosphohistidine intermediate.

This sequence belongs to the NDK family. As to quaternary structure, homotetramer. Mg(2+) serves as cofactor.

It is found in the cytoplasm. It carries out the reaction a 2'-deoxyribonucleoside 5'-diphosphate + ATP = a 2'-deoxyribonucleoside 5'-triphosphate + ADP. The enzyme catalyses a ribonucleoside 5'-diphosphate + ATP = a ribonucleoside 5'-triphosphate + ADP. In terms of biological role, major role in the synthesis of nucleoside triphosphates other than ATP. The ATP gamma phosphate is transferred to the NDP beta phosphate via a ping-pong mechanism, using a phosphorylated active-site intermediate. The chain is Nucleoside diphosphate kinase from Yersinia pseudotuberculosis serotype I (strain IP32953).